Reading from the N-terminus, the 275-residue chain is MKLKGEVALVTGGGAGLGRAIVDRYVAEGARVAVLDKSAAGLEEIRKRHGDAVVGIEGDVRSLDSHREAVARCVETFGKLDCLIGNAGVWDYQTQLADIPDNGISEAFDEMFAIIVKGYILAAKAALPALYKSKGSAIFTVSNAGFYPGGGGVLYTAGKHAVIGLVKQLAHEWGPRIRVNGIAPGGILGSDIRGLKTLGLQDQTIATMPLADMLGPVLPTGRVATAEEYAGAYVFFATRADTVPLTGSVLNIDGGMGVRGLFEASLGAQLDKHFA.

The active-site Proton acceptor is Tyr155.

The protein belongs to the short-chain dehydrogenases/reductases (SDR) family.

The catalysed reaction is (1R,2R)-3-chlorocyclohexa-3,5-diene-1,2-diol + NAD(+) = 3-chlorocatechol + NADH + H(+). The protein operates within aromatic compound metabolism. In terms of biological role, can transform various dihydrodiols of chlorobenzenes and chlorotoluenes into the respective catechols. The sequence is that of Chlorobenzene dihydrodiol dehydrogenase from Cupriavidus sp. (strain PS12).